Reading from the N-terminus, the 104-residue chain is Large ribosomal subunit protein bL21 (104 aa).

The protein belongs to the bacterial ribosomal protein bL21 family. In terms of assembly, part of the 50S ribosomal subunit. Contacts protein L20.

Functionally, this protein binds to 23S rRNA in the presence of protein L20. This Lactococcus lactis subsp. lactis (strain IL1403) (Streptococcus lactis) protein is Large ribosomal subunit protein bL21.